The following is a 286-amino-acid chain: uncharacterized protein (286 aa).

The AB hydrolase-1 domain occupies 26–268 (PLIILCHGFC…DACHYDIYEG (243 aa)).

To E.coli YcjY.

This is an uncharacterized protein from Escherichia coli.